A 400-amino-acid chain; its full sequence is Chalcone synthase C2 (400 aa).

The active site involves C168.

The protein belongs to the thiolase-like superfamily. Chalcone/stilbene synthases family.

The catalysed reaction is (E)-4-coumaroyl-CoA + 3 malonyl-CoA + 3 H(+) = 2',4,4',6'-tetrahydroxychalcone + 3 CO2 + 4 CoA. It functions in the pathway secondary metabolite biosynthesis; flavonoid biosynthesis. Functionally, the primary product of this enzyme is 4,2',4',6'-tetrahydroxychalcone (also termed naringenin-chalcone or chalcone) which can under specific conditions spontaneously isomerize into naringenin. In Zea mays (Maize), this protein is Chalcone synthase C2 (C2).